The chain runs to 546 residues: Cholesterol oxidase (546 aa).

Residues 1–42 (MTAQQHLSRRRMLGMAAFGAAALAGGTTIAAPRAAAAAKSAA) constitute a signal peptide (tat-type signal). 8 residues coordinate FAD: tyrosine 57, glycine 58, glutamate 77, glycine 152, asparagine 156, glycine 157, methionine 159, and valine 287. Active-site proton acceptor residues include glutamate 398 and histidine 484. Residues glycine 512 and phenylalanine 524 each contribute to the FAD site.

This sequence belongs to the GMC oxidoreductase family. As to quaternary structure, monomer. It depends on FAD as a cofactor. Post-translationally, predicted to be exported by the Tat system. The position of the signal peptide cleavage has been experimentally proven.

The protein localises to the secreted. It carries out the reaction cholesterol + O2 = cholest-5-en-3-one + H2O2. The enzyme catalyses cholest-5-en-3-one = cholest-4-en-3-one. Its pathway is steroid metabolism; cholesterol degradation. In terms of biological role, bifunctional enzyme that catalyzes the oxidation and isomerization of cholesterol to cholestenone (cholest-4-en-3-one), an initial step in the cholesterol degradation process. The cholesterol degradation pathway allows the bacterium to utilize cholesterol as its sole source of carbon and energy. This is Cholesterol oxidase from Streptomyces sp. (strain SA-COO).